A 251-amino-acid polypeptide reads, in one-letter code: Hydroxyacylglutathione hydrolase (251 aa).

7 residues coordinate Zn(2+): H53, H55, D57, H58, H110, D127, and H165.

The protein belongs to the metallo-beta-lactamase superfamily. Glyoxalase II family. In terms of assembly, monomer. The cofactor is Zn(2+).

It carries out the reaction an S-(2-hydroxyacyl)glutathione + H2O = a 2-hydroxy carboxylate + glutathione + H(+). Its pathway is secondary metabolite metabolism; methylglyoxal degradation; (R)-lactate from methylglyoxal: step 2/2. Its function is as follows. Thiolesterase that catalyzes the hydrolysis of S-D-lactoyl-glutathione to form glutathione and D-lactic acid. The chain is Hydroxyacylglutathione hydrolase from Blochmanniella pennsylvanica (strain BPEN).